A 146-amino-acid chain; its full sequence is 3-dehydroquinate dehydratase (146 aa).

Tyr23 functions as the Proton acceptor in the catalytic mechanism. Asn74, His80, and Asp87 together coordinate substrate. The active-site Proton donor is the His100. Substrate-binding positions include 101–102 and Arg111; that span reads IS.

This sequence belongs to the type-II 3-dehydroquinase family. In terms of assembly, homododecamer.

The enzyme catalyses 3-dehydroquinate = 3-dehydroshikimate + H2O. It functions in the pathway metabolic intermediate biosynthesis; chorismate biosynthesis; chorismate from D-erythrose 4-phosphate and phosphoenolpyruvate: step 3/7. Functionally, catalyzes a trans-dehydration via an enolate intermediate. The sequence is that of 3-dehydroquinate dehydratase from Bacillus cereus (strain G9842).